The primary structure comprises 271 residues: 2,3,4,5-tetrahydropyridine-2,6-dicarboxylate N-succinyltransferase (271 aa).

Substrate-binding residues include Arg103 and Asp140.

Belongs to the transferase hexapeptide repeat family. As to quaternary structure, homotrimer.

It localises to the cytoplasm. It catalyses the reaction (S)-2,3,4,5-tetrahydrodipicolinate + succinyl-CoA + H2O = (S)-2-succinylamino-6-oxoheptanedioate + CoA. It functions in the pathway amino-acid biosynthesis; L-lysine biosynthesis via DAP pathway; LL-2,6-diaminopimelate from (S)-tetrahydrodipicolinate (succinylase route): step 1/3. The chain is 2,3,4,5-tetrahydropyridine-2,6-dicarboxylate N-succinyltransferase from Methylococcus capsulatus (strain ATCC 33009 / NCIMB 11132 / Bath).